A 119-amino-acid polypeptide reads, in one-letter code: Ribonuclease P protein component (119 aa).

The protein belongs to the RnpA family. Consists of a catalytic RNA component (M1 or rnpB) and a protein subunit.

It catalyses the reaction Endonucleolytic cleavage of RNA, removing 5'-extranucleotides from tRNA precursor.. RNaseP catalyzes the removal of the 5'-leader sequence from pre-tRNA to produce the mature 5'-terminus. It can also cleave other RNA substrates such as 4.5S RNA. The protein component plays an auxiliary but essential role in vivo by binding to the 5'-leader sequence and broadening the substrate specificity of the ribozyme. The chain is Ribonuclease P protein component from Dictyoglomus turgidum (strain DSM 6724 / Z-1310).